A 622-amino-acid chain; its full sequence is Auxin response factor 11 (622 aa).

A DNA-binding region (TF-B3) is located at residues 145 to 247 (FVKILTASDT…DLRVGVRRLA (103 aa)). Disordered stretches follow at residues 358 to 398 (SIQR…ISEI) and 483 to 513 (SNIS…TRSR). Polar residues-rich tracts occupy residues 376–387 (SALTPTPTQQQS) and 483–511 (SNIS…TSTR). The 84-residue stretch at 511–594 (RSRIKVQMQG…KKLFIYPSDE (84 aa)) folds into the PB1 domain.

It belongs to the ARF family. Homodimers and heterodimers.

It is found in the nucleus. Functionally, auxin response factors (ARFs) are transcriptional factors that bind specifically to the DNA sequence 5'-TGTCTC-3' found in the auxin-responsive promoter elements (AuxREs). Could act as transcriptional activator or repressor. Formation of heterodimers with Aux/IAA proteins may alter their ability to modulate early auxin response genes expression. This chain is Auxin response factor 11 (ARF11), found in Arabidopsis thaliana (Mouse-ear cress).